The sequence spans 1273 residues: Receptor-type tyrosine-protein phosphatase C (1273 aa).

An N-terminal signal peptide occupies residues 1–23 (MYLWLKLLAFSLALLGPEVFVTG). Over 24 to 546 (QGTTDDGLDT…KPQSTSYNSK (523 aa)) the chain is Extracellular. The interval 45–192 (LPARTTEFTP…TEIATPQTKP (148 aa)) is disordered. 3 stretches are compositionally biased toward polar residues: residues 50 to 77 (TEFTPPSISERGNGSSETTYLPGFSSTL), 84 to 111 (QPDSQTPSARGADTQTLSSQADLTTLTA), and 141 to 192 (RNST…QTKP). N62 is a glycosylation site (N-linked (GlcNAc...) asparagine). N-linked (GlcNAc...) asparagine glycosylation is found at N142, N153, N164, N178, N200, N245, N250, N271, N282, N327, N333, N371, N374, N471, and N502. Fibronectin type-III domains follow at residues 361–452 (PEML…TKAA) and 453–545 (RPGK…SYNS). Residues 547–567 (ALIIFLVFLIIVTSIALLVVL) traverse the membrane as a helical segment. The Cytoplasmic portion of the chain corresponds to 568 to 1273 (YKIYDLRKKR…PMSPALTPSS (706 aa)). 2 consecutive Tyrosine-protein phosphatase domains span residues 622–881 (FLAE…LVEY) and 913–1196 (LEAE…MASI). Position 652 is a phosphotyrosine (Y652). Residues D790, 822–828 (CSAGVGR), and Q866 each bind substrate. C822 functions as the Phosphocysteine intermediate in the catalytic mechanism. Phosphoserine is present on residues S944, S963, S966, S970, S973, S974, and S978. Residues 960-984 (LEMSKESEAESDESSDEDSDSEETS) are disordered. Positions 968–981 (AESDESSDEDSDSE) are enriched in acidic residues. The active-site Phosphocysteine intermediate is the C1137. 2 positions are modified to phosphoserine: S1209 and S1266. The segment at 1219–1273 (VDGAKQDANCVQPADPLNKAQEDSKEVGASEPASGSEEPEHSANGPMSPALTPSS) is disordered.

Belongs to the protein-tyrosine phosphatase family. Receptor class 1/6 subfamily. In terms of assembly, interacts with SKAP1. Interacts with DPP4; the interaction is enhanced in an interleukin-12-dependent manner in activated lymphocytes. Binds GANAB and PRKCSH. Interacts with CD53; this interaction stabilizes PTPRC on the membrane and is required for optimal phosphatase activity. Interacts with CLEC10A. Heavily N- and O-glycosylated. Post-translationally, the cytoplasmic domain contains potential phosphorylation sites. In terms of tissue distribution, isoform 1 and isoform 2 are found in thymocyte and lymph node. Isoform 4 and isoform 3 are found in the lymph nod.

The protein resides in the cell membrane. It localises to the membrane raft. Its subcellular location is the synapse. The enzyme catalyses O-phospho-L-tyrosyl-[protein] + H2O = L-tyrosyl-[protein] + phosphate. In terms of biological role, protein tyrosine-protein phosphatase required for T-cell activation through the antigen receptor. Acts as a positive regulator of T-cell coactivation upon binding to DPP4. The first PTPase domain has enzymatic activity, while the second one seems to affect the substrate specificity of the first one. Upon T-cell activation, recruits and dephosphorylates SKAP1 and FYN. Dephosphorylates LYN, and thereby modulates LYN activity. Interacts with CLEC10A at antigen presenting cell-T cell contact; CLEC10A on immature dendritic cells recognizes Tn antigen-carrying PTPRC/CD45 receptor on effector T cells and modulates T cell activation threshold to limit autoreactivity. This is Receptor-type tyrosine-protein phosphatase C (Ptprc) from Rattus norvegicus (Rat).